The chain runs to 365 residues: Decapping nuclease RAI1 (365 aa).

An a divalent metal cation-binding site is contributed by E165. 2 residues coordinate substrate: C197 and E214. 3 residues coordinate a divalent metal cation: D216, E234, and L235. Substrate is bound by residues K236 and Q260.

Belongs to the DXO/Dom3Z family. Interacts with rat1; the interaction is direct, stabilizes rat1 protein structure and stimulates its exoribonuclease activity. The interaction also stimulates rai1 pyrophosphohydrolase activity, probably by recruiting it to mRNA substrates. A divalent metal cation serves as cofactor.

The protein localises to the nucleus. The catalysed reaction is a 5'-end NAD(+)-phospho-ribonucleoside in mRNA + H2O = a 5'-end phospho-ribonucleoside in mRNA + NAD(+) + H(+). It carries out the reaction a 5'-end (N(7)-methyl 5'-triphosphoguanosine)-ribonucleoside-ribonucleotide in mRNA + H2O = a (N(7)-methyl 5'-triphosphoguanosine)-nucleoside + a 5'-end phospho-ribonucleoside in mRNA + H(+). The enzyme catalyses a 5'-end triphospho-ribonucleoside in mRNA + H2O = a 5'-end phospho-ribonucleoside in mRNA + diphosphate + H(+). Decapping enzyme for NAD-capped RNAs: specifically hydrolyzes the nicotinamide adenine dinucleotide (NAD) cap from a subset of RNAs by removing the entire NAD moiety from the 5'-end of an NAD-capped RNA. The NAD-cap is present at the 5'-end of some RNAs and snoRNAs. In contrast to the canonical 5'-end N7 methylguanosine (m7G) cap, the NAD cap promotes mRNA decay. Also acts as a non-canonical decapping enzyme that removes the entire cap structure of m7G capped or incompletely capped RNAs. Has decapping activity toward incomplete 5'-end m7G cap mRNAs such as unmethylated 5'-end-capped RNA (cap0), while it has no activity toward 2'-O-ribose methylated m7G cap (cap1). Also possesses RNA 5'-pyrophosphohydrolase activity by hydrolyzing the 5'-end triphosphate to release pyrophosphates. Stimulates exoribonuclease activity of Rat1, allowing it to degrade RNAs with stable secondary structure more effectively. The protein is Decapping nuclease RAI1 (rai1) of Aspergillus fumigatus (strain ATCC MYA-4609 / CBS 101355 / FGSC A1100 / Af293) (Neosartorya fumigata).